The chain runs to 349 residues: ATPase GET3 (349 aa).

An ATP-binding site is contributed by 27–34 (KGGVGKTT). Aspartate 58 is a catalytic residue. Residues glutamate 240 and asparagine 267 each contribute to the ATP site. Positions 280 and 283 each coordinate Zn(2+).

This sequence belongs to the arsA ATPase family. In terms of assembly, homodimer. Component of the Golgi to ER traffic (GET) complex, which is composed of GET1, GET2 and GET3. Within the complex, GET1 and GET2 form a heterotetramer which is stabilized by phosphatidylinositol binding and which binds to the GET3 homodimer. Interacts with the chloride channel protein GEF1.

Its subcellular location is the cytoplasm. The protein localises to the endoplasmic reticulum. The protein resides in the golgi apparatus. ATPase required for the post-translational delivery of tail-anchored (TA) proteins to the endoplasmic reticulum. Recognizes and selectively binds the transmembrane domain of TA proteins in the cytosol. This complex then targets to the endoplasmic reticulum by membrane-bound receptors GET1 and GET2, where the tail-anchored protein is released for insertion. This process is regulated by ATP binding and hydrolysis. ATP binding drives the homodimer towards the closed dimer state, facilitating recognition of newly synthesized TA membrane proteins. ATP hydrolysis is required for insertion. Subsequently, the homodimer reverts towards the open dimer state, lowering its affinity for the GET1-GET2 receptor, and returning it to the cytosol to initiate a new round of targeting. Cooperates with the HDEL receptor ERD2 to mediate the ATP-dependent retrieval of resident ER proteins that contain a C-terminal H-D-E-L retention signal from the Golgi to the ER. Involved in low-level resistance to the oxyanions arsenite and arsenate, and in heat tolerance. This chain is ATPase GET3, found in Eremothecium gossypii (strain ATCC 10895 / CBS 109.51 / FGSC 9923 / NRRL Y-1056) (Yeast).